We begin with the raw amino-acid sequence, 61 residues long: ERMES regulator 1 (61 aa).

At 1–20 the chain is on the mitochondrial intermembrane side; the sequence is MLPNLRRIFASFRTEEEERS. The helical transmembrane segment at 21-43 threads the bilayer; that stretch reads YSRKAFFHLIGYITCSVLFSWLV. Residues 44–61 are Cytoplasmic-facing; that stretch reads RKKVISSPVVSSPIHALS.

This sequence belongs to the EMR1 family. In terms of assembly, interacts with the ER-mitochondria encounter structure (ERMES) complex. Interacts with mdm12. Interacts with mdm34.

It is found in the mitochondrion outer membrane. In terms of biological role, mediates the formation of endoplasmic reticulum (ER)-mitochondria encounter structure (ERMES) foci, thereby contributing to the formation of ER-mitochondrial contact sites. This is ERMES regulator 1 from Schizosaccharomyces pombe (strain 972 / ATCC 24843) (Fission yeast).